A 306-amino-acid polypeptide reads, in one-letter code: Ornithine carbamoyltransferase (306 aa).

Carbamoyl phosphate-binding positions include 54–57 (STRT), Gln-81, Arg-105, and 132–135 (HPLQ). L-ornithine-binding positions include Asn-162, Asp-226, and 230-231 (SM). Carbamoyl phosphate contacts are provided by residues 266-267 (CL) and Arg-294.

Belongs to the aspartate/ornithine carbamoyltransferase superfamily. OTCase family.

It localises to the cytoplasm. It carries out the reaction carbamoyl phosphate + L-ornithine = L-citrulline + phosphate + H(+). It functions in the pathway amino-acid biosynthesis; L-arginine biosynthesis; L-arginine from L-ornithine and carbamoyl phosphate: step 1/3. Reversibly catalyzes the transfer of the carbamoyl group from carbamoyl phosphate (CP) to the N(epsilon) atom of ornithine (ORN) to produce L-citrulline. The chain is Ornithine carbamoyltransferase from Sulfolobus acidocaldarius (strain ATCC 33909 / DSM 639 / JCM 8929 / NBRC 15157 / NCIMB 11770).